Reading from the N-terminus, the 307-residue chain is Elongation factor Ts (307 aa).

The segment at 79-82 is involved in Mg(2+) ion dislocation from EF-Tu; it reads TDFV.

Belongs to the EF-Ts family.

It is found in the cytoplasm. Associates with the EF-Tu.GDP complex and induces the exchange of GDP to GTP. It remains bound to the aminoacyl-tRNA.EF-Tu.GTP complex up to the GTP hydrolysis stage on the ribosome. The chain is Elongation factor Ts from Bartonella tribocorum (strain CIP 105476 / IBS 506).